A 183-amino-acid chain; its full sequence is Ribosome rescue factor SmrB (183 aa).

Positions 98 to 173 (LDLHGLTQKQ…GDAALLVLIE (76 aa)) constitute a Smr domain.

The protein belongs to the SmrB family. Associates with collided ribosomes, but not with correctly translating polysomes.

Acts as a ribosome collision sensor. Detects stalled/collided disomes (pairs of ribosomes where the leading ribosome is stalled and a second ribosome has collided with it) and endonucleolytically cleaves mRNA at the 5' boundary of the stalled ribosome. Stalled/collided disomes form a new interface (primarily via the 30S subunits) that binds SmrB. Cleaved mRNA becomes available for tmRNA ligation, leading to ribosomal subunit dissociation and rescue of stalled ribosomes. The chain is Ribosome rescue factor SmrB from Erwinia tasmaniensis (strain DSM 17950 / CFBP 7177 / CIP 109463 / NCPPB 4357 / Et1/99).